We begin with the raw amino-acid sequence, 343 residues long: S-adenosylmethionine:tRNA ribosyltransferase-isomerase (343 aa).

The protein belongs to the QueA family. In terms of assembly, monomer.

It is found in the cytoplasm. It carries out the reaction 7-aminomethyl-7-carbaguanosine(34) in tRNA + S-adenosyl-L-methionine = epoxyqueuosine(34) in tRNA + adenine + L-methionine + 2 H(+). Its pathway is tRNA modification; tRNA-queuosine biosynthesis. Its function is as follows. Transfers and isomerizes the ribose moiety from AdoMet to the 7-aminomethyl group of 7-deazaguanine (preQ1-tRNA) to give epoxyqueuosine (oQ-tRNA). In Geotalea uraniireducens (strain Rf4) (Geobacter uraniireducens), this protein is S-adenosylmethionine:tRNA ribosyltransferase-isomerase.